A 294-amino-acid chain; its full sequence is GTPase Era (294 aa).

In terms of domain architecture, Era-type G spans 4-170 (KSGFVSVIGR…VEEIFTFLPE (167 aa)). Positions 12–19 (GRPNVGKS) are G1. 12–19 (GRPNVGKS) contacts GTP. A G2 region spans residues 38 to 42 (QTTRN). The tract at residues 59–62 (DTPG) is G3. Residues 59–63 (DTPGI) and 121–124 (NKID) contribute to the GTP site. The interval 121 to 124 (NKID) is G4. The segment at 149-151 (ISA) is G5. Positions 201 to 278 (TREEVPYGVA…YLDLWVKIEK (78 aa)) constitute a KH type-2 domain.

It belongs to the TRAFAC class TrmE-Era-EngA-EngB-Septin-like GTPase superfamily. Era GTPase family. Monomer.

The protein resides in the cytoplasm. Its subcellular location is the cell inner membrane. An essential GTPase that binds both GDP and GTP, with rapid nucleotide exchange. Plays a role in 16S rRNA processing and 30S ribosomal subunit biogenesis and possibly also in cell cycle regulation and energy metabolism. The protein is GTPase Era of Halothermothrix orenii (strain H 168 / OCM 544 / DSM 9562).